Consider the following 417-residue polypeptide: MINTNLKNYDPKIWKLIIKEKKRQESYINLIASENYVSSSILEAQGSCLTNKYAEGYIGNRFYNGCNIIDKIEKIAIKRAKKLFNVEYVNVQPHSGSQANFSVFNALLKPNDIILGMNLNHGGHLTHGSTVNFSGKLYKSFSYGVNKCGEIDYDALKYLSHLHRPKMIIGGFSAYSGICDWKYMRKIADEINAYFFVDISHIVGLIVAGIYPNPLKYAHVVSTTTHKTLGGPRGGLIISNCGNKKIYSKLDSSVFPGSQGGPLMHVIAAKAISFKEALEPKFFLLQKNILFFSKKMVKIFLKRNFSVISGKTNNHLFLIDLSEKKISGKEASNILALARIIVNKNTIPNDSQSPYITSGIRIGTPAIVKRGISIKYVIKITNWICDILNEPNNLIKIKKISKKIKKICYKYPIYNKI.

(6S)-5,6,7,8-tetrahydrofolate is bound by residues Leu119 and 123–125 (GHL). The residue at position 227 (Lys227) is an N6-(pyridoxal phosphate)lysine.

Belongs to the SHMT family. Homodimer. It depends on pyridoxal 5'-phosphate as a cofactor.

Its subcellular location is the cytoplasm. It catalyses the reaction (6R)-5,10-methylene-5,6,7,8-tetrahydrofolate + glycine + H2O = (6S)-5,6,7,8-tetrahydrofolate + L-serine. It functions in the pathway one-carbon metabolism; tetrahydrofolate interconversion. It participates in amino-acid biosynthesis; glycine biosynthesis; glycine from L-serine: step 1/1. Catalyzes the reversible interconversion of serine and glycine with tetrahydrofolate (THF) serving as the one-carbon carrier. This reaction serves as the major source of one-carbon groups required for the biosynthesis of purines, thymidylate, methionine, and other important biomolecules. Also exhibits THF-independent aldolase activity toward beta-hydroxyamino acids, producing glycine and aldehydes, via a retro-aldol mechanism. This Buchnera aphidicola subsp. Cinara cedri (strain Cc) protein is Serine hydroxymethyltransferase.